Here is a 263-residue protein sequence, read N- to C-terminus: 3'-5' ssDNA/RNA exonuclease TatD (263 aa).

3 residues coordinate a divalent metal cation: glutamate 92, histidine 128, and histidine 153.

This sequence belongs to the metallo-dependent hydrolases superfamily. TatD-type hydrolase family. TatD subfamily. In terms of assembly, monomer. The cofactor is Mg(2+).

It is found in the cytoplasm. 3'-5' exonuclease that prefers single-stranded DNA and RNA. May play a role in the H(2)O(2)-induced DNA damage repair. This Rahnella sp. (strain Y9602) protein is 3'-5' ssDNA/RNA exonuclease TatD.